Consider the following 132-residue polypeptide: Small ribosomal subunit protein uS8 (132 aa).

This sequence belongs to the universal ribosomal protein uS8 family. As to quaternary structure, part of the 30S ribosomal subunit. Contacts proteins S5 and S12.

Functionally, one of the primary rRNA binding proteins, it binds directly to 16S rRNA central domain where it helps coordinate assembly of the platform of the 30S subunit. This is Small ribosomal subunit protein uS8 from Mycolicibacterium smegmatis (strain ATCC 700084 / mc(2)155) (Mycobacterium smegmatis).